Here is a 64-residue protein sequence, read N- to C-terminus: MRILYLLFSLLFLALQVSPGLSSPRRDMLFCKGGSCHFGGCPSHLIKVGSCFGFRSCCKWPWNA.

Positions 1-22 (MRILYLLFSLLFLALQVSPGLS) are cleaved as a signal peptide. A propeptide spanning residues 23-28 (SPRRDM) is cleaved from the precursor. Intrachain disulfides connect cysteine 31–cysteine 57, cysteine 36–cysteine 51, and cysteine 41–cysteine 58.

In terms of tissue distribution, expressed in circulating heterophil granulocytes and bone marrow (at protein level). Strong expression in the bone marrow, lung and testis. Moderate expression in the bursa and intestine. Low expression in the cloaca, gall bladder, brain, pancreas, trachea, air sacs and spleen. Expressed in the vagina, ovarian stroma and the theca layer of the ovarian follicle, but not in the granulosa layer of the ovarian follicle.

It localises to the secreted. Its subcellular location is the cytoplasmic granule. Its function is as follows. Potent antibacterial activity against the Gram-negative bacterium E.coli ML-35, and against the Gram-positive bacterium L.monocytogenes EGD. Lacks antifungal activity against C.albicans. The polypeptide is Gallinacin-2 (GAL2) (Gallus gallus (Chicken)).